Consider the following 200-residue polypeptide: Probable UbiX-like flavin prenyltransferase (200 aa).

Residues 9-11, serine 36, 87-90, and arginine 122 each bind FMN; these read GAT and SMKT.

The protein belongs to the UbiX/PAD1 family. YclB subfamily. As to quaternary structure, homododecamer.

It carries out the reaction dimethylallyl phosphate + FMNH2 = prenylated FMNH2 + phosphate. Functionally, involved in the non-oxidative decarboxylation and detoxification of phenolic derivatives under both aerobic and anaerobic conditions. Flavin prenyltransferase that catalyzes the synthesis of the prenylated FMN cofactor (prenyl-FMN) for phenolic acid decarboxylase. In Streptomyces sp. (strain D7), this protein is Probable UbiX-like flavin prenyltransferase.